We begin with the raw amino-acid sequence, 353 residues long: UPF0283 membrane protein YcjF (353 aa).

Positions 16 to 35 (KEESTSAFKAQQTFSEAESR) are disordered. Residues 20–31 (TSAFKAQQTFSE) are compositionally biased toward polar residues. 3 consecutive transmembrane segments (helical) span residues 70 to 90 (MVMG…VQWT), 100 to 120 (VALG…GSVV), and 213 to 233 (ESTL…FIAW).

The protein belongs to the UPF0283 family.

Its subcellular location is the cell inner membrane. This is UPF0283 membrane protein YcjF from Salmonella heidelberg (strain SL476).